The sequence spans 180 residues: Nucleoside triphosphate/diphosphate phosphatase (180 aa).

Catalysis depends on arginine 26, which acts as the Proton donor. Mg(2+)-binding residues include asparagine 90, aspartate 106, aspartate 108, aspartate 110, aspartate 123, and glutamate 126.

The protein belongs to the Ntdp family. Mg(2+) serves as cofactor.

The catalysed reaction is a ribonucleoside 5'-triphosphate + H2O = a ribonucleoside 5'-diphosphate + phosphate + H(+). It catalyses the reaction a ribonucleoside 5'-diphosphate + H2O = a ribonucleoside 5'-phosphate + phosphate + H(+). Its function is as follows. Has nucleoside phosphatase activity towards nucleoside triphosphates and nucleoside diphosphates. This is Nucleoside triphosphate/diphosphate phosphatase from Staphylococcus haemolyticus (strain JCSC1435).